A 200-amino-acid chain; its full sequence is Peptidyl-tRNA hydrolase (200 aa).

Position 15 (Y15) interacts with tRNA. The active-site Proton acceptor is H20. Residues Y66, N68, and N114 each contribute to the tRNA site.

This sequence belongs to the PTH family. Monomer.

The protein localises to the cytoplasm. The enzyme catalyses an N-acyl-L-alpha-aminoacyl-tRNA + H2O = an N-acyl-L-amino acid + a tRNA + H(+). Its function is as follows. Hydrolyzes ribosome-free peptidyl-tRNAs (with 1 or more amino acids incorporated), which drop off the ribosome during protein synthesis, or as a result of ribosome stalling. Functionally, catalyzes the release of premature peptidyl moieties from peptidyl-tRNA molecules trapped in stalled 50S ribosomal subunits, and thus maintains levels of free tRNAs and 50S ribosomes. The protein is Peptidyl-tRNA hydrolase of Paraburkholderia xenovorans (strain LB400).